The sequence spans 240 residues: Probable transcriptional regulatory protein SO_3401 (240 aa).

The protein belongs to the TACO1 family.

The protein resides in the cytoplasm. The chain is Probable transcriptional regulatory protein SO_3401 from Shewanella oneidensis (strain ATCC 700550 / JCM 31522 / CIP 106686 / LMG 19005 / NCIMB 14063 / MR-1).